The following is a 342-amino-acid chain: Glucokinase (342 aa).

Residue 7-12 (GDIGGT) participates in ATP binding.

The protein belongs to the bacterial glucokinase family.

Its subcellular location is the cytoplasm. The catalysed reaction is D-glucose + ATP = D-glucose 6-phosphate + ADP + H(+). This chain is Glucokinase, found in Nostoc sp. (strain PCC 7120 / SAG 25.82 / UTEX 2576).